A 628-amino-acid chain; its full sequence is Probable potassium transport system protein Kup 1 (628 aa).

The next 12 helical transmembrane spans lie at 18 to 38 (ITLA…LYAL), 58 to 78 (IVSL…VLLV), 106 to 126 (ALLM…AVIT), 141 to 161 (ITPE…VILF), 175 to 195 (FGPI…YEIV), 219 to 239 (IAFI…ALYA), 253 to 273 (WGSL…ALLL), 285 to 305 (LLAP…ATVI), 343 to 363 (IYLP…IIWF), 371 to 391 (AAYG…LMVV), 401 to 421 (WLIA…FAAN), and 425 to 445 (FLAG…VMTT).

The protein belongs to the HAK/KUP transporter (TC 2.A.72) family.

It is found in the cell inner membrane. It catalyses the reaction K(+)(in) + H(+)(in) = K(+)(out) + H(+)(out). In terms of biological role, transport of potassium into the cell. Likely operates as a K(+):H(+) symporter. The protein is Probable potassium transport system protein Kup 1 of Aeromonas hydrophila subsp. hydrophila (strain ATCC 7966 / DSM 30187 / BCRC 13018 / CCUG 14551 / JCM 1027 / KCTC 2358 / NCIMB 9240 / NCTC 8049).